The following is a 156-amino-acid chain: 6,7-dimethyl-8-ribityllumazine synthase (156 aa).

5-amino-6-(D-ribitylamino)uracil-binding positions include Phe23, 57 to 59 (AFE), and 81 to 83 (AVI). 86 to 87 (AT) is a (2S)-2-hydroxy-3-oxobutyl phosphate binding site. His89 functions as the Proton donor in the catalytic mechanism. Phe114 is a binding site for 5-amino-6-(D-ribitylamino)uracil. Arg128 lines the (2S)-2-hydroxy-3-oxobutyl phosphate pocket.

This sequence belongs to the DMRL synthase family.

The catalysed reaction is (2S)-2-hydroxy-3-oxobutyl phosphate + 5-amino-6-(D-ribitylamino)uracil = 6,7-dimethyl-8-(1-D-ribityl)lumazine + phosphate + 2 H2O + H(+). It participates in cofactor biosynthesis; riboflavin biosynthesis; riboflavin from 2-hydroxy-3-oxobutyl phosphate and 5-amino-6-(D-ribitylamino)uracil: step 1/2. In terms of biological role, catalyzes the formation of 6,7-dimethyl-8-ribityllumazine by condensation of 5-amino-6-(D-ribitylamino)uracil with 3,4-dihydroxy-2-butanone 4-phosphate. This is the penultimate step in the biosynthesis of riboflavin. The protein is 6,7-dimethyl-8-ribityllumazine synthase of Sulfurovum sp. (strain NBC37-1).